Consider the following 453-residue polypeptide: Pup--protein ligase (453 aa).

Position 9 (glutamate 9) interacts with Mg(2+). An ATP-binding site is contributed by arginine 53. Residue tyrosine 55 participates in Mg(2+) binding. Catalysis depends on aspartate 57, which acts as the Proton acceptor. Residue glutamate 63 coordinates Mg(2+). Residues threonine 66 and tryptophan 420 each coordinate ATP.

The protein belongs to the Pup ligase/Pup deamidase family. Pup-conjugating enzyme subfamily.

It catalyses the reaction ATP + [prokaryotic ubiquitin-like protein]-L-glutamate + [protein]-L-lysine = ADP + phosphate + N(6)-([prokaryotic ubiquitin-like protein]-gamma-L-glutamyl)-[protein]-L-lysine.. It functions in the pathway protein degradation; proteasomal Pup-dependent pathway. It participates in protein modification; protein pupylation. Its function is as follows. Catalyzes the covalent attachment of the prokaryotic ubiquitin-like protein modifier Pup to the proteasomal substrate proteins, thereby targeting them for proteasomal degradation. This tagging system is termed pupylation. The ligation reaction involves the side-chain carboxylate of the C-terminal glutamate of Pup and the side-chain amino group of a substrate lysine. In Streptomyces scabiei (strain 87.22), this protein is Pup--protein ligase.